A 393-amino-acid polypeptide reads, in one-letter code: MYLVGEALIGEGAELAHIDLLLGSKEGPVGSAFANAVSQLSMGHTPLLAVVRPNLLTKPATVIIPKVTLKDMEQVNEMFGPVQAAVAKAIADSLEEGAFKDIDIEGIAIIASAFVHPEAKDYNRIYRYNYGATKLALHRALDKFPDEKTLVYEKDRAAHGIMGFKVQRLWDPPYLQVAMDLVDMGKVAQVLKEVPQNDHVIIEAGTPLIKKFGLNVIGEIRKLRPNAFIIADMKILDTGNLEARMAADATADAVVVSGLAPTSTIEKAISEARKVGIYSIIDMLNVQNPAKLIEKLKVKPDIVELHRAIDTEETAHAWGDIPAMKKAAGGKLLVATAGGIRVEVVKDALKAGADILVVGRSITASKDIGHATDEFLDQLNREEIDQFRIMTDF.

A formaldehyde-activating enzyme region spans residues Met1 to Ile161. The active-site Proton donor is the His17. Substrate-binding residues include Asp19, Leu48, Lys66, Thr68, and Gln83. The 3-hexulose-6-phosphate synthase stretch occupies residues Met162–Phe393.

It in the N-terminal section; belongs to the formaldehyde-activating enzyme family. The protein in the C-terminal section; belongs to the HPS/KGPDC family. HPS subfamily.

The catalysed reaction is 5,6,7,8-tetrahydromethanopterin + formaldehyde = 5,10-methylenetetrahydromethanopterin + H2O. The enzyme catalyses D-ribulose 5-phosphate + formaldehyde = D-arabino-hex-3-ulose 6-phosphate. The protein operates within carbohydrate biosynthesis; D-ribose 5-phosphate biosynthesis. Catalyzes the condensation of formaldehyde with tetrahydromethanopterin (H(4)MPT) to 5,10-methylenetetrahydromethanopterin. Its function is as follows. Catalyzes the reversible formation of ribulose-5-phosphate and formaldehyde from 3-hexulose-6-phosphate. The polypeptide is Bifunctional enzyme Fae/Hps (Methanoregula boonei (strain DSM 21154 / JCM 14090 / 6A8)).